Here is a 419-residue protein sequence, read N- to C-terminus: UDP-N-acetylglucosamine 1-carboxyvinyltransferase (419 aa).

22–23 (KN) serves as a coordination point for phosphoenolpyruvate. Arg-93 contributes to the UDP-N-acetyl-alpha-D-glucosamine binding site. The active-site Proton donor is the Cys-117. Cys-117 bears the 2-(S-cysteinyl)pyruvic acid O-phosphothioketal mark. UDP-N-acetyl-alpha-D-glucosamine contacts are provided by Asp-306 and Ile-328.

Belongs to the EPSP synthase family. MurA subfamily.

The protein resides in the cytoplasm. It catalyses the reaction phosphoenolpyruvate + UDP-N-acetyl-alpha-D-glucosamine = UDP-N-acetyl-3-O-(1-carboxyvinyl)-alpha-D-glucosamine + phosphate. The protein operates within cell wall biogenesis; peptidoglycan biosynthesis. Its function is as follows. Cell wall formation. Adds enolpyruvyl to UDP-N-acetylglucosamine. In Idiomarina loihiensis (strain ATCC BAA-735 / DSM 15497 / L2-TR), this protein is UDP-N-acetylglucosamine 1-carboxyvinyltransferase.